The sequence spans 425 residues: CinA-like protein (425 aa).

It belongs to the CinA family.

This Shewanella sp. (strain ANA-3) protein is CinA-like protein.